The following is a 195-amino-acid chain: U8 snoRNA-decapping enzyme (195 aa).

In terms of domain architecture, Nudix hydrolase spans 18 to 168; sequence GWRHACHALL…LENTFIGNAR (151 aa). 3 residues coordinate substrate: His-24, Arg-50, and Phe-57. 4 residues coordinate Mn(2+): Gly-59, Glu-76, Glu-80, and His-99. The Nudix box signature appears at 61–82; sequence FVDLRDGSLEDGLNRELGEELG. Positions 166 and 170 each coordinate substrate. Glu-173 is a Mn(2+) binding site.

Belongs to the Nudix hydrolase family. NUDT16 subfamily. In terms of assembly, homodimer. Requires Mg(2+) as cofactor. It depends on Mn(2+) as a cofactor. Co(2+) is required as a cofactor.

It is found in the nucleus. Its subcellular location is the nucleolus. The protein resides in the nucleoplasm. It localises to the cytoplasm. It catalyses the reaction a 5'-end (N(7)-methyl 5'-triphosphoguanosine)-ribonucleoside in mRNA + H2O = N(7)-methyl-GDP + a 5'-end phospho-ribonucleoside in mRNA + 2 H(+). The enzyme catalyses IDP + H2O = IMP + phosphate + H(+). The catalysed reaction is dIDP + H2O = dIMP + phosphate + H(+). It carries out the reaction a 5'-end NAD(+)-phospho-ribonucleoside in mRNA + H2O = a 5'-end phospho-ribonucleoside in mRNA + NAD(+) + H(+). It catalyses the reaction a 5'-end FAD-phospho-ribonucleoside in mRNA + H2O = a 5'-end phospho-adenosine-phospho-ribonucleoside in mRNA + FMN + 2 H(+). The enzyme catalyses a 5'-end CoA-ribonucleoside in mRNA + H2O = a 5'-end phospho-adenosine-phospho-ribonucleoside in mRNA + (R)-4'-phosphopantetheine + 2 H(+). Its function is as follows. RNA-binding and decapping enzyme that catalyzes the cleavage of the cap structure of snoRNAs and mRNAs in a metal-dependent manner. Part of the U8 snoRNP complex that is required for the accumulation of mature 5.8S and 28S rRNA. Has diphosphatase activity and removes m7G and/or m227G caps from U8 snoRNA and leaves a 5'monophosphate on the RNA. Also catalyzes the cleavage of the cap structure on mRNAs. Does not hydrolyze cap analog structures like 7-methylguanosine nucleoside triphosphate (m7GpppG). Also hydrolysis m7G- and m227G U3-capped RNAs but with less efficiencies. Has broad substrate specificity with manganese or cobalt as cofactor and can act on various RNA species. Binds to the U8 snoRNA; metal is not required for RNA-binding. May play a role in the regulation of snoRNAs and mRNAs degradation. Also acts as a phosphatase; hydrolyzes the non-canonical purine nucleotides inosine diphosphate (IDP) and deoxyinosine diphosphate (dITP) as well as guanosine diphosphate (GDP), deoxyguanosine diphosphate (dGDP), xanthine diphosphate (XDP), inosine triphosphate (ITP) and deoxyinosine triphosphate (ITP) to their respective monophosphate derivatives and does not distinguish between the deoxy- and ribose forms. The order of activity with different substrates is IDP &gt; dIDP &gt;&gt; GDP = dGDP &gt; XDP = ITP = dITP. Binds strongly to GTP, ITP and XTP. Participates in the hydrolysis of dIDP/IDP and probably excludes non-canonical purines from RNA and DNA precursor pools, thus preventing their incorporation into RNA and DNA and avoiding chromosomal lesions. Exhibits decapping activity towards NAD-capped RNAs and FAD-capped RNAs. Exhibits decapping activity towards dpCoA-capped RNAs in vitro. This is U8 snoRNA-decapping enzyme (NUDT16) from Bos taurus (Bovine).